Consider the following 173-residue polypeptide: Crossover junction endodeoxyribonuclease RuvC (173 aa).

Active-site residues include aspartate 8, glutamate 67, and aspartate 139. Positions 8, 67, and 139 each coordinate Mg(2+).

This sequence belongs to the RuvC family. In terms of assembly, homodimer which binds Holliday junction (HJ) DNA. The HJ becomes 2-fold symmetrical on binding to RuvC with unstacked arms; it has a different conformation from HJ DNA in complex with RuvA. In the full resolvosome a probable DNA-RuvA(4)-RuvB(12)-RuvC(2) complex forms which resolves the HJ. Mg(2+) serves as cofactor.

Its subcellular location is the cytoplasm. The enzyme catalyses Endonucleolytic cleavage at a junction such as a reciprocal single-stranded crossover between two homologous DNA duplexes (Holliday junction).. Its function is as follows. The RuvA-RuvB-RuvC complex processes Holliday junction (HJ) DNA during genetic recombination and DNA repair. Endonuclease that resolves HJ intermediates. Cleaves cruciform DNA by making single-stranded nicks across the HJ at symmetrical positions within the homologous arms, yielding a 5'-phosphate and a 3'-hydroxyl group; requires a central core of homology in the junction. The consensus cleavage sequence is 5'-(A/T)TT(C/G)-3'. Cleavage occurs on the 3'-side of the TT dinucleotide at the point of strand exchange. HJ branch migration catalyzed by RuvA-RuvB allows RuvC to scan DNA until it finds its consensus sequence, where it cleaves and resolves the cruciform DNA. This is Crossover junction endodeoxyribonuclease RuvC from Shewanella amazonensis (strain ATCC BAA-1098 / SB2B).